The chain runs to 1270 residues: DNA-directed RNA polymerase subunit beta (1270 aa).

Belongs to the RNA polymerase beta chain family. As to quaternary structure, the RNAP catalytic core consists of 2 alpha, 1 beta, 1 beta' and 1 omega subunit. When a sigma factor is associated with the core the holoenzyme is formed, which can initiate transcription.

The catalysed reaction is RNA(n) + a ribonucleoside 5'-triphosphate = RNA(n+1) + diphosphate. Its function is as follows. DNA-dependent RNA polymerase catalyzes the transcription of DNA into RNA using the four ribonucleoside triphosphates as substrates. This chain is DNA-directed RNA polymerase subunit beta, found in Flavobacterium psychrophilum (strain ATCC 49511 / DSM 21280 / CIP 103535 / JIP02/86).